Consider the following 464-residue polypeptide: MAKSILIRSLYRNTDDFLSKEITISGWIRTLRSSNAFGFIEVNDGSFFKNIQVVFDDKLNNFKEISKLPISSSISVIGILVATPEAKQPFEIQAKNIIIEGMSNSDYPLQKKRHTFEYLRTIAHLRPRSNAFAATFRVRSVAAYAIHKFFQDQNFVYTHTPIITGSDCEGAGEMFRVTTLDPKTPELSKDGSVDFSKDFFGKETNLTVSGQLNAECFALAFRNIYTFGPTFRAENSNTTRHAAEFWMIEPEIAFADLQDDMELAENMLKYVIKYVMDECPEELEFFNQFVDKGLLERLNHVVSSDFAKVTYTEAVEILQKCGKKFDYDVSWGIDLQTEHERYLTEEHFKKPLFVTDYPKDIKAFYMRLNDDGKTVAATDLLVPGIGEIIGGSQREERLDVLKDRMTELNLSEDDYWWYLELRKYGETKHAGFGLGFERLIMYITGMTNIRDVVPFPRTPGTSEF.

Belongs to the class-II aminoacyl-tRNA synthetase family. As to quaternary structure, homodimer.

Its subcellular location is the cytoplasm. It catalyses the reaction tRNA(Asn) + L-asparagine + ATP = L-asparaginyl-tRNA(Asn) + AMP + diphosphate + H(+). This is Asparagine--tRNA ligase from Clostridium beijerinckii (strain ATCC 51743 / NCIMB 8052) (Clostridium acetobutylicum).